The following is a 359-amino-acid chain: Membrane-bound lytic murein transglycosylase C (359 aa).

Residues 1–16 (MKKYLALALIAPLLIS) form the signal peptide. C17 is lipidated: N-palmitoyl cysteine. C17 carries S-diacylglycerol cysteine lipidation.

It belongs to the transglycosylase Slt family.

It is found in the cell outer membrane. It carries out the reaction Exolytic cleavage of the (1-&gt;4)-beta-glycosidic linkage between N-acetylmuramic acid (MurNAc) and N-acetylglucosamine (GlcNAc) residues in peptidoglycan, from either the reducing or the non-reducing ends of the peptidoglycan chains, with concomitant formation of a 1,6-anhydrobond in the MurNAc residue.. Functionally, murein-degrading enzyme. May play a role in recycling of muropeptides during cell elongation and/or cell division. The sequence is that of Membrane-bound lytic murein transglycosylase C from Escherichia coli O81 (strain ED1a).